Here is a 780-residue protein sequence, read N- to C-terminus: Elongation factor G-2, chloroplastic (780 aa).

A chloroplast-targeting transit peptide spans Met-1 to Met-79. Residues Lys-91–Leu-366 form the tr-type G domain. GTP contacts are provided by residues Ala-100 to Thr-107, Asp-164 to His-168, and Asn-218 to Asp-221.

The protein belongs to the TRAFAC class translation factor GTPase superfamily. Classic translation factor GTPase family. EF-G/EF-2 subfamily.

It is found in the plastid. Its subcellular location is the chloroplast. Its pathway is protein biosynthesis; polypeptide chain elongation. Its function is as follows. Chloroplast-localized elongation factor EF-G involved in protein synthesis in plastids. Catalyzes the GTP-dependent ribosomal translocation step during translation elongation. During this step, the ribosome changes from the pre-translocational (PRE) to the post-translocational (POST) state as the newly formed A-site-bound peptidyl-tRNA and P-site-bound deacylated tRNA move to the P and E sites, respectively. Catalyzes the coordinated movement of the two tRNA molecules, the mRNA and conformational changes in the ribosome. The polypeptide is Elongation factor G-2, chloroplastic (fusA2) (Glycine max (Soybean)).